Here is a 178-residue protein sequence, read N- to C-terminus: Large ribosomal subunit protein uL10 (178 aa).

It belongs to the universal ribosomal protein uL10 family. Part of the ribosomal stalk of the 50S ribosomal subunit. The N-terminus interacts with L11 and the large rRNA to form the base of the stalk. The C-terminus forms an elongated spine to which L12 dimers bind in a sequential fashion forming a multimeric L10(L12)X complex.

Its function is as follows. Forms part of the ribosomal stalk, playing a central role in the interaction of the ribosome with GTP-bound translation factors. The sequence is that of Large ribosomal subunit protein uL10 from Petrotoga mobilis (strain DSM 10674 / SJ95).